A 182-amino-acid polypeptide reads, in one-letter code: MAQDKENLIWIDLEMTGLDPEQERIIEIATIVTDKNLNILAEGPVLAVHQPNQLLDKMSDWCIKTHTANGLVERVKASKLTERAAELQTIDFLKLWVPKGASPICGNSVAQDKRFLFKYMPDLADYFHYRHLDVSTLKELARRWKPEISDGFQKANTHLALDDIRESIKELAYYREHFIKLD.

Residues 8 to 171 (LIWIDLEMTG…DDIRESIKEL (164 aa)) enclose the Exonuclease domain. Residue Y129 is part of the active site.

The protein belongs to the oligoribonuclease family.

It is found in the cytoplasm. Functionally, 3'-to-5' exoribonuclease specific for small oligoribonucleotides. The sequence is that of Oligoribonuclease from Actinobacillus succinogenes (strain ATCC 55618 / DSM 22257 / CCUG 43843 / 130Z).